We begin with the raw amino-acid sequence, 400 residues long: Elongation factor Tu (400 aa).

Residues 10-210 (KPHVNVGTIG…ALDSYIPEPV (201 aa)) enclose the tr-type G domain. A G1 region spans residues 19–26 (GHVDHGKT). 19 to 26 (GHVDHGKT) is a binding site for GTP. Position 26 (T26) interacts with Mg(2+). The G2 stretch occupies residues 66–70 (ILTIA). Positions 87 to 90 (DCPG) are G3. Residues 87-91 (DCPGH) and 142-145 (NKCD) contribute to the GTP site. Residues 142 to 145 (NKCD) form a G4 region. The tract at residues 180–182 (SAI) is G5.

This sequence belongs to the TRAFAC class translation factor GTPase superfamily. Classic translation factor GTPase family. EF-Tu/EF-1A subfamily. Monomer.

It localises to the cytoplasm. The enzyme catalyses GTP + H2O = GDP + phosphate + H(+). GTP hydrolase that promotes the GTP-dependent binding of aminoacyl-tRNA to the A-site of ribosomes during protein biosynthesis. This Gemmatimonas aurantiaca (strain DSM 14586 / JCM 11422 / NBRC 100505 / T-27) protein is Elongation factor Tu.